The sequence spans 328 residues: Malate dehydrogenase (328 aa).

11-17 (GAAGQIG) contributes to the NAD(+) binding site. 2 residues coordinate substrate: R94 and R100. Residues N107, Q114, and 131–133 (VGN) contribute to the NAD(+) site. Residues N133 and R164 each contribute to the substrate site. The active-site Proton acceptor is the H189.

Belongs to the LDH/MDH superfamily. MDH type 2 family.

It carries out the reaction (S)-malate + NAD(+) = oxaloacetate + NADH + H(+). Its function is as follows. Catalyzes the reversible oxidation of malate to oxaloacetate. This Acinetobacter baumannii (strain AB0057) protein is Malate dehydrogenase.